The following is a 196-amino-acid chain: tRNA(Phe) 7-((3-amino-3-carboxypropyl)-4-demethylwyosine(37)-N(4))-methyltransferase (196 aa).

The protein belongs to the TYW3 family.

It carries out the reaction 4-demethyl-7-[(3S)-3-amino-3-carboxypropyl]wyosine(37) in tRNA(Phe) + S-adenosyl-L-methionine = 7-[(3S)-3-amino-3-carboxypropyl]wyosine(37) in tRNA(Phe) + S-adenosyl-L-homocysteine + H(+). Its function is as follows. S-adenosyl-L-methionine-dependent methyltransferase that acts as a component of the wyosine derivatives biosynthesis pathway. Probably methylates N-4 position of wybutosine-86 to produce wybutosine-72. The sequence is that of tRNA(Phe) 7-((3-amino-3-carboxypropyl)-4-demethylwyosine(37)-N(4))-methyltransferase from Archaeoglobus fulgidus (strain ATCC 49558 / DSM 4304 / JCM 9628 / NBRC 100126 / VC-16).